Here is a 124-residue protein sequence, read N- to C-terminus: MAIAKAEILESIANMTVLELSELIKEMEEKFGVSAAAATVAVAAAPAAAAAVEEQTEFSVILTAAGDNKVNVIKVVRAVTGLGLKEAKDLVDGAPKTVKEGISKEDAESLKKQLVEAGAGCEIK.

This sequence belongs to the bacterial ribosomal protein bL12 family. As to quaternary structure, homodimer. Part of the ribosomal stalk of the 50S ribosomal subunit. Forms a multimeric L10(L12)X complex, where L10 forms an elongated spine to which 2 to 4 L12 dimers bind in a sequential fashion. Binds GTP-bound translation factors.

Forms part of the ribosomal stalk which helps the ribosome interact with GTP-bound translation factors. Is thus essential for accurate translation. The protein is Large ribosomal subunit protein bL12 of Nitrosomonas europaea (strain ATCC 19718 / CIP 103999 / KCTC 2705 / NBRC 14298).